Consider the following 218-residue polypeptide: Uracil-DNA glycosylase (218 aa).

Asp60 (proton acceptor) is an active-site residue.

The protein belongs to the uracil-DNA glycosylase (UDG) superfamily. UNG family.

The protein resides in the cytoplasm. The catalysed reaction is Hydrolyzes single-stranded DNA or mismatched double-stranded DNA and polynucleotides, releasing free uracil.. Functionally, excises uracil residues from the DNA which can arise as a result of misincorporation of dUMP residues by DNA polymerase or due to deamination of cytosine. In Francisella philomiragia subsp. philomiragia (strain ATCC 25017 / CCUG 19701 / FSC 153 / O#319-036), this protein is Uracil-DNA glycosylase.